The primary structure comprises 546 residues: CTP synthase (546 aa).

Positions 1-264 (MRYIVVTGGV…TKYIMKAMRL (264 aa)) are amidoligase domain. S12 serves as a coordination point for CTP. Residue S12 coordinates UTP. ATP is bound by residues 13 to 18 (GLGKGI) and D70. The Mg(2+) site is built by D70 and E140. CTP-binding positions include 147–149 (DIE), 185–190 (KTKPTQ), and K221. UTP-binding positions include 185 to 190 (KTKPTQ) and K221. The 237-residue stretch at 298 to 534 (GSQCTDPMKD…VEAMKAQRLR (237 aa)) folds into the Glutamine amidotransferase type-1 domain. Position 357 (G357) interacts with L-glutamine. The active-site Nucleophile; for glutamine hydrolysis is C384. L-glutamine contacts are provided by residues 385 to 388 (FGMQ), E408, and R464. Active-site residues include H507 and E509.

This sequence belongs to the CTP synthase family. In terms of assembly, homotetramer.

It carries out the reaction UTP + L-glutamine + ATP + H2O = CTP + L-glutamate + ADP + phosphate + 2 H(+). It catalyses the reaction L-glutamine + H2O = L-glutamate + NH4(+). The enzyme catalyses UTP + NH4(+) + ATP = CTP + ADP + phosphate + 2 H(+). The protein operates within pyrimidine metabolism; CTP biosynthesis via de novo pathway; CTP from UDP: step 2/2. Its activity is regulated as follows. Allosterically activated by GTP, when glutamine is the substrate; GTP has no effect on the reaction when ammonia is the substrate. The allosteric effector GTP functions by stabilizing the protein conformation that binds the tetrahedral intermediate(s) formed during glutamine hydrolysis. Inhibited by the product CTP, via allosteric rather than competitive inhibition. Its function is as follows. Catalyzes the ATP-dependent amination of UTP to CTP with either L-glutamine or ammonia as the source of nitrogen. Regulates intracellular CTP levels through interactions with the four ribonucleotide triphosphates. This is CTP synthase from Methanothrix thermoacetophila (strain DSM 6194 / JCM 14653 / NBRC 101360 / PT) (Methanosaeta thermophila).